Consider the following 737-residue polypeptide: Catalase-peroxidase (737 aa).

Positions 1–32 are disordered; that stretch reads MSKENMSNEGKCPFNHGAAGTNQSSGRGTSNK. Over residues 20 to 32 the composition is skewed to polar residues; the sequence is GTNQSSGRGTSNK. The tryptophyl-tyrosyl-methioninium (Trp-Tyr) (with M-252) cross-link spans 103-226; the sequence is WHSAGTYRTA…LAAVQMGLIY (124 aa). Histidine 104 serves as the catalytic Proton acceptor. Residues 226–252 constitute a cross-link (tryptophyl-tyrosyl-methioninium (Tyr-Met) (with W-103)); sequence YVNPEGPEGKPDTLASARDIRDTFGRM. Histidine 267 contacts heme b.

Belongs to the peroxidase family. Peroxidase/catalase subfamily. Homodimer or homotetramer. Heme b is required as a cofactor. Post-translationally, formation of the three residue Trp-Tyr-Met cross-link is important for the catalase, but not the peroxidase activity of the enzyme.

The catalysed reaction is H2O2 + AH2 = A + 2 H2O. The enzyme catalyses 2 H2O2 = O2 + 2 H2O. Functionally, bifunctional enzyme with both catalase and broad-spectrum peroxidase activity. This is Catalase-peroxidase from Marinomonas sp. (strain MWYL1).